Here is a 270-residue protein sequence, read N- to C-terminus: Orotidine 5'-phosphate decarboxylase (270 aa).

Residues aspartate 41, 63 to 65 (KTH), 95 to 104 (DRKFADIGNT), tyrosine 221, and arginine 239 contribute to the substrate site. The Proton donor role is filled by lysine 97.

This sequence belongs to the OMP decarboxylase family.

The catalysed reaction is orotidine 5'-phosphate + H(+) = UMP + CO2. It functions in the pathway pyrimidine metabolism; UMP biosynthesis via de novo pathway; UMP from orotate: step 2/2. This Candida boidinii (Yeast) protein is Orotidine 5'-phosphate decarboxylase (URA3).